The chain runs to 431 residues: Cyclic GMP-AMP synthase-like receptor (431 aa).

Residues serine 73 and 85 to 87 (EFD) contribute to the ATP site. Positions 85, 87, and 212 each coordinate Mg(2+). Residue aspartate 212 coordinates GTP. Residues lysine 290 and 304–308 (SYALK) each bind ATP. Glutamate 316 lines the Mn(2+) pocket.

This sequence belongs to the mab-21 family. It depends on Mg(2+) as a cofactor. Mn(2+) is required as a cofactor.

It catalyses the reaction GTP + ATP = 2',3'-cGAMP + 2 diphosphate. The catalysed reaction is GTP + ATP = pppGp(2'-5')A + diphosphate. The enzyme catalyses pppGp(2'-5')A = 2',3'-cGAMP + diphosphate. Nucleotidyltransferase that catalyzes the formation of cyclic GMP-AMP (2',3'-cGAMP) from ATP and GTP and plays a key role in innate immunity. Acts as a key sensor of double-stranded RNA (dsRNA), the presence of dsRNA in the cytoplasm being a danger signal that triggers the immune responses. Directly binds dsRNA, activating the nucleotidyltransferase activity, leading to synthesis of 2',3'-cGAMP, a second messenger that binds to and activates Sting, thereby triggering the immune response via activation of the NF-kappa-B transcription factor. The sequence is that of Cyclic GMP-AMP synthase-like receptor from Frankliniella occidentalis (Western flower thrips).